A 115-amino-acid chain; its full sequence is Toxin-like structure LSTX-D2 (115 aa).

The signal sequence occupies residues 1–22 (MKVLVLFSVLFLTLFSYSSTEA). Residues 23–44 (IDEFDSDAEDDMLSLMANEQVR) constitute a propeptide that is removed on maturation. 4 disulfides stabilise this stretch: Cys-48–Cys-63, Cys-55–Cys-72, Cys-62–Cys-87, and Cys-74–Cys-85.

Belongs to the neurotoxin 19 (CSTX) family. 01 subfamily. Expressed by the venom gland.

It is found in the secreted. The sequence is that of Toxin-like structure LSTX-D2 from Lycosa singoriensis (Wolf spider).